Here is a 144-residue protein sequence, read N- to C-terminus: Effector EagT6 (144 aa).

As to quaternary structure, homodimer. Two dimers interact with Tse6; this interaction is crucial for Tse6 loading onto VgrG1a.

Functionally, plays an essential role in toxin Tse6 delivery to target cells and specifically in the loading of Tse6 onto VgrG1a. This Pseudomonas aeruginosa (strain ATCC 15692 / DSM 22644 / CIP 104116 / JCM 14847 / LMG 12228 / 1C / PRS 101 / PAO1) protein is Effector EagT6.